Consider the following 175-residue polypeptide: ATP synthase subunit d, mitochondrial (175 aa).

An N-acetylserine modification is found at S2.

As to quaternary structure, F-type ATP synthases have 2 components, the catalytic core F(1) and the membrane-embedded component F(0), linked together by a central stalk and a peripheral stalk. The central stalk, also called rotor shaft, is often seen as part of F(1). The peripheral stalk is seen as part of F(0). F(0) contains the membrane channel next to the rotor. F-type ATP synthases form dimers but each monomer functions independently in ATP generation. The dimer consists of 18 different polypeptides: ATP1 (subunit alpha, part of F(1), 3 molecules per monomer), ATP2 (subunit beta, part of F(1), 3 molecules per monomer), ATP3 (subunit gamma, part of the central stalk), ATP4 (subunit b, part of the peripheral stalk), ATP5/OSCP (subunit 5/OSCP, part of the peripheral stalk), ATP6 (subunit a, part of the peripheral stalk), ATP7 (subunit d, part of the peripheral stalk), ATP8 (subunit 8, part of the peripheral stalk), OLI1 (subunit c, part of the rotor, 10 molecules per monomer), ATP14 (subunit h, part of the peripheral stalk), ATP15 (subunit epsilon, part of the central stalk), ATP16 (subunit delta, part of the central stalk), ATP17 (subunit f, part of the peripheral stalk), ATP18 (subunit i/j, part of the peripheral stalk). Dimer-specific subunits are ATP19 (subunit k, at interface between monomers), ATP20 (subunit g, at interface between monomers), TIM11 (subunit e, at interface between monomers). Also contains subunit L.

Its subcellular location is the mitochondrion inner membrane. Its function is as follows. Mitochondrial membrane ATP synthase (F(1)F(0) ATP synthase or Complex V) produces ATP from ADP in the presence of a proton gradient across the membrane which is generated by electron transport complexes of the respiratory chain. F-type ATP synthases consist of two structural domains, F(1) - containing the extramembraneous catalytic core, and F(0) - containing the membrane proton channel, linked together by a central stalk and a peripheral stalk. During catalysis, ATP synthesis in the catalytic domain of F(1) is coupled via a rotary mechanism of the central stalk subunits to proton translocation. Part of the complex F(0) domain and the peripheral stalk, which acts as a stator to hold the catalytic alpha/ATP1(3)beta/ATP2(3) subcomplex and subunit a/ATP6 static relative to the rotary elements. The polypeptide is ATP synthase subunit d, mitochondrial (Pichia angusta (Yeast)).